Here is a 232-residue protein sequence, read N- to C-terminus: Large ribosomal subunit protein uL1 (232 aa).

This sequence belongs to the universal ribosomal protein uL1 family. In terms of assembly, part of the 50S ribosomal subunit.

Binds directly to 23S rRNA. The L1 stalk is quite mobile in the ribosome, and is involved in E site tRNA release. In terms of biological role, protein L1 is also a translational repressor protein, it controls the translation of the L11 operon by binding to its mRNA. In Chlamydia trachomatis serovar D (strain ATCC VR-885 / DSM 19411 / UW-3/Cx), this protein is Large ribosomal subunit protein uL1.